We begin with the raw amino-acid sequence, 469 residues long: 3-isopropylmalate dehydratase large subunit (469 aa).

[4Fe-4S] cluster contacts are provided by Cys350, Cys410, and Cys413.

The protein belongs to the aconitase/IPM isomerase family. LeuC type 1 subfamily. As to quaternary structure, heterodimer of LeuC and LeuD. Requires [4Fe-4S] cluster as cofactor.

It catalyses the reaction (2R,3S)-3-isopropylmalate = (2S)-2-isopropylmalate. The protein operates within amino-acid biosynthesis; L-leucine biosynthesis; L-leucine from 3-methyl-2-oxobutanoate: step 2/4. Catalyzes the isomerization between 2-isopropylmalate and 3-isopropylmalate, via the formation of 2-isopropylmaleate. The polypeptide is 3-isopropylmalate dehydratase large subunit (Agrobacterium fabrum (strain C58 / ATCC 33970) (Agrobacterium tumefaciens (strain C58))).